The sequence spans 206 residues: Small ribosomal subunit protein uS4 (206 aa).

Residues 96-156 (GRLDNVVYRM…EKAKKQARIK (61 aa)) form the S4 RNA-binding domain.

The protein belongs to the universal ribosomal protein uS4 family. As to quaternary structure, part of the 30S ribosomal subunit. Contacts protein S5. The interaction surface between S4 and S5 is involved in control of translational fidelity.

Functionally, one of the primary rRNA binding proteins, it binds directly to 16S rRNA where it nucleates assembly of the body of the 30S subunit. With S5 and S12 plays an important role in translational accuracy. The protein is Small ribosomal subunit protein uS4 of Aeromonas salmonicida (strain A449).